A 468-amino-acid chain; its full sequence is ATP synthase subunit beta (468 aa).

Residue 155-162 (GGAGVGKT) coordinates ATP.

The protein belongs to the ATPase alpha/beta chains family. In terms of assembly, F-type ATPases have 2 components, CF(1) - the catalytic core - and CF(0) - the membrane proton channel. CF(1) has five subunits: alpha(3), beta(3), gamma(1), delta(1), epsilon(1). CF(0) has three main subunits: a(1), b(2) and c(9-12). The alpha and beta chains form an alternating ring which encloses part of the gamma chain. CF(1) is attached to CF(0) by a central stalk formed by the gamma and epsilon chains, while a peripheral stalk is formed by the delta and b chains.

The protein localises to the cell membrane. The enzyme catalyses ATP + H2O + 4 H(+)(in) = ADP + phosphate + 5 H(+)(out). Its function is as follows. Produces ATP from ADP in the presence of a proton gradient across the membrane. The catalytic sites are hosted primarily by the beta subunits. The sequence is that of ATP synthase subunit beta from Bacillus cereus (strain B4264).